Reading from the N-terminus, the 595-residue chain is RuBisCO large subunit-binding protein subunit beta, chloroplastic (595 aa).

A chloroplast-targeting transit peptide spans Met1–Met49.

This sequence belongs to the chaperonin (HSP60) family. Oligomer of probably six alpha and six beta subunits.

Its subcellular location is the plastid. The protein localises to the chloroplast. Its function is as follows. This protein binds RuBisCO small and large subunits and is implicated in the assembly of the enzyme oligomer. This chain is RuBisCO large subunit-binding protein subunit beta, chloroplastic, found in Pisum sativum (Garden pea).